The sequence spans 110 residues: Protein RnfH (110 aa).

Residues 86-110 (RQRRVEKTRKAGSIEGRRWQNKDSR) are disordered. Residues 100-110 (EGRRWQNKDSR) show a composition bias toward basic and acidic residues.

Belongs to the UPF0125 (RnfH) family.

This chain is Protein RnfH, found in Paraburkholderia xenovorans (strain LB400).